Reading from the N-terminus, the 325-residue chain is Lipoyl synthase (325 aa).

Positions 1-24 (MPIAPDRVRHPEKANRPDNPIQRK) are disordered. 7 residues coordinate [4Fe-4S] cluster: Cys-54, Cys-59, Cys-65, Cys-80, Cys-84, Cys-87, and Ser-293. Residues 66–282 (WKKKHATFMI…VTVGRGKGFL (217 aa)) form the Radical SAM core domain.

Belongs to the radical SAM superfamily. Lipoyl synthase family. It depends on [4Fe-4S] cluster as a cofactor.

It localises to the cytoplasm. It catalyses the reaction [[Fe-S] cluster scaffold protein carrying a second [4Fe-4S](2+) cluster] + N(6)-octanoyl-L-lysyl-[protein] + 2 oxidized [2Fe-2S]-[ferredoxin] + 2 S-adenosyl-L-methionine + 4 H(+) = [[Fe-S] cluster scaffold protein] + N(6)-[(R)-dihydrolipoyl]-L-lysyl-[protein] + 4 Fe(3+) + 2 hydrogen sulfide + 2 5'-deoxyadenosine + 2 L-methionine + 2 reduced [2Fe-2S]-[ferredoxin]. Its pathway is protein modification; protein lipoylation via endogenous pathway; protein N(6)-(lipoyl)lysine from octanoyl-[acyl-carrier-protein]: step 2/2. Its function is as follows. Catalyzes the radical-mediated insertion of two sulfur atoms into the C-6 and C-8 positions of the octanoyl moiety bound to the lipoyl domains of lipoate-dependent enzymes, thereby converting the octanoylated domains into lipoylated derivatives. This is Lipoyl synthase from Rhodospirillum centenum (strain ATCC 51521 / SW).